Reading from the N-terminus, the 331-residue chain is Glycine betaine/proline betaine-binding periplasmic protein (331 aa).

Residues 1-21 (MRHTVIFASAFATLVTASAFA) form the signal peptide. Substrate is bound by residues tryptophan 86, histidine 90, and 161–163 (WGC). The cysteines at positions 157 and 163 are disulfide-linked.

In terms of assembly, the complex is composed of two ATP-binding proteins (ProV), two transmembrane proteins (ProW) and a solute-binding protein (ProX).

The protein localises to the periplasm. Part of the ProU ABC transporter complex involved in glycine betaine and proline betaine uptake. Binds glycine betaine and proline betaine with high affinity. The chain is Glycine betaine/proline betaine-binding periplasmic protein (proX) from Salmonella typhimurium (strain LT2 / SGSC1412 / ATCC 700720).